The sequence spans 623 residues: Probable lysophospholipase 5 (623 aa).

The first 19 residues, 1–19 (MKLSSFGLFLALQLLPALG), serve as a signal peptide directing secretion. Positions 67-607 (ACPSGSLLRP…NQYCWNGTIA (541 aa)) constitute a PLA2c domain. N-linked (GlcNAc...) asparagine glycosylation is found at N118, N153, N187, N232, N256, N264, N293, N331, N360, N367, N400, N403, N474, N508, N513, N537, N564, N586, and N603.

Belongs to the lysophospholipase family.

It is found in the secreted. The enzyme catalyses a 1-acyl-sn-glycero-3-phosphocholine + H2O = sn-glycerol 3-phosphocholine + a fatty acid + H(+). Functionally, catalyzes the release of fatty acids from lysophospholipids. The protein is Probable lysophospholipase 5 (plb5) of Schizosaccharomyces pombe (strain 972 / ATCC 24843) (Fission yeast).